The sequence spans 192 residues: UPF0301 protein Jann_3896 (192 aa).

Belongs to the UPF0301 (AlgH) family.

The polypeptide is UPF0301 protein Jann_3896 (Jannaschia sp. (strain CCS1)).